A 300-amino-acid chain; its full sequence is Acetaldehyde dehydrogenase 1 (300 aa).

Residue 11–14 participates in NAD(+) binding; it reads SGNI. Residue Cys126 is the Acyl-thioester intermediate of the active site. NAD(+) is bound by residues 157-165 and Asn276; that span reads SAGPGTRAN.

This sequence belongs to the acetaldehyde dehydrogenase family.

It catalyses the reaction acetaldehyde + NAD(+) + CoA = acetyl-CoA + NADH + H(+). The chain is Acetaldehyde dehydrogenase 1 from Rhodococcus erythropolis (strain PR4 / NBRC 100887).